The chain runs to 334 residues: Holliday junction branch migration complex subunit RuvB (334 aa).

Positions 4–184 are large ATPase domain (RuvB-L); the sequence is ADRLIQPQLQ…FGIPLRLEFY (181 aa). Residues Arg-24, Gly-65, Lys-68, Thr-69, Thr-70, 131–133, Arg-174, Tyr-184, and Arg-221 each bind ATP; that span reads EDY. Position 69 (Thr-69) interacts with Mg(2+). A small ATPAse domain (RuvB-S) region spans residues 185-255; that stretch reads NVKDLSTIVT…VAEHALDLLD (71 aa). The interval 258-334 is head domain (RuvB-H); sequence GEGFDYMDRK…YLHFGMIKPE (77 aa). The DNA site is built by Arg-294, Arg-313, and Arg-318.

It belongs to the RuvB family. As to quaternary structure, homohexamer. Forms an RuvA(8)-RuvB(12)-Holliday junction (HJ) complex. HJ DNA is sandwiched between 2 RuvA tetramers; dsDNA enters through RuvA and exits via RuvB. An RuvB hexamer assembles on each DNA strand where it exits the tetramer. Each RuvB hexamer is contacted by two RuvA subunits (via domain III) on 2 adjacent RuvB subunits; this complex drives branch migration. In the full resolvosome a probable DNA-RuvA(4)-RuvB(12)-RuvC(2) complex forms which resolves the HJ.

The protein localises to the cytoplasm. The enzyme catalyses ATP + H2O = ADP + phosphate + H(+). In terms of biological role, the RuvA-RuvB-RuvC complex processes Holliday junction (HJ) DNA during genetic recombination and DNA repair, while the RuvA-RuvB complex plays an important role in the rescue of blocked DNA replication forks via replication fork reversal (RFR). RuvA specifically binds to HJ cruciform DNA, conferring on it an open structure. The RuvB hexamer acts as an ATP-dependent pump, pulling dsDNA into and through the RuvAB complex. RuvB forms 2 homohexamers on either side of HJ DNA bound by 1 or 2 RuvA tetramers; 4 subunits per hexamer contact DNA at a time. Coordinated motions by a converter formed by DNA-disengaged RuvB subunits stimulates ATP hydrolysis and nucleotide exchange. Immobilization of the converter enables RuvB to convert the ATP-contained energy into a lever motion, pulling 2 nucleotides of DNA out of the RuvA tetramer per ATP hydrolyzed, thus driving DNA branch migration. The RuvB motors rotate together with the DNA substrate, which together with the progressing nucleotide cycle form the mechanistic basis for DNA recombination by continuous HJ branch migration. Branch migration allows RuvC to scan DNA until it finds its consensus sequence, where it cleaves and resolves cruciform DNA. This is Holliday junction branch migration complex subunit RuvB from Shewanella sp. (strain MR-4).